The chain runs to 255 residues: MSLSDLARQIIKEQLDTASRSENNKNTVVYSVETGLKDPTRDGTVAQVSFKFSKPVSQDLLNIRTASILKAVSSSLDLSGDLGALENLIQATAGKKSSVGKKRSTGRVQVNFGDPSDVEDGYSGAVTGASGRFVSNSNMKIILEIVAKEYLIKDMKKAGAPLKFRTGRFANSLKIKDVMLRDSETSKGSPELNVTYNYMTRPYSVFNPAVSTYRRLSLRPYPGARNPQKLIGEAIAKAARDLIHSRYKIKVNQGT.

It localises to the virion. In terms of biological role, putative role in tail stability. This chain is Tail completion protein p143, found in Escherichia phage T5 (Enterobacteria phage T5).